Consider the following 926-residue polypeptide: ABC transporter A family member 6 (926 aa).

A run of 6 helical transmembrane segments spans residues 34-54 (LIVIPLYLCVVLVCIQAVFDS), 336-356 (ASLIGPIFFTWVILLLFPVIL), 389-409 (FLAISTLYIVCLMIFGSAIGL), 418-438 (TIQFMFYFLYINLQISIAFLV), 451-471 (VAYIYVFGSGLLGAFLFQFLI), and 525-545 (DEVFTIIIVEWVVALVATYYI). The 238-residue stretch at 610–847 (IVCDNLKKVY…YGGSYVLTIT (238 aa)) folds into the ABC transporter domain. 648-655 (GPNGAGKT) contributes to the ATP binding site.

Belongs to the ABC transporter superfamily. ABCA family. CPR flippase (TC 3.A.1.211) subfamily.

The protein localises to the membrane. This chain is ABC transporter A family member 6 (ABCA6), found in Arabidopsis thaliana (Mouse-ear cress).